Consider the following 638-residue polypeptide: 1-deoxy-D-xylulose-5-phosphate synthase (638 aa).

Thiamine diphosphate contacts are provided by residues H75 and 116 to 118 (AHS). A Mg(2+)-binding site is contributed by D147. Thiamine diphosphate is bound by residues 148-149 (GA), N177, Y288, and E370. A Mg(2+)-binding site is contributed by N177.

It belongs to the transketolase family. DXPS subfamily. Homodimer. Mg(2+) is required as a cofactor. Thiamine diphosphate serves as cofactor.

It catalyses the reaction D-glyceraldehyde 3-phosphate + pyruvate + H(+) = 1-deoxy-D-xylulose 5-phosphate + CO2. Its pathway is metabolic intermediate biosynthesis; 1-deoxy-D-xylulose 5-phosphate biosynthesis; 1-deoxy-D-xylulose 5-phosphate from D-glyceraldehyde 3-phosphate and pyruvate: step 1/1. Its function is as follows. Catalyzes the acyloin condensation reaction between C atoms 2 and 3 of pyruvate and glyceraldehyde 3-phosphate to yield 1-deoxy-D-xylulose-5-phosphate (DXP). The polypeptide is 1-deoxy-D-xylulose-5-phosphate synthase (Cupriavidus taiwanensis (strain DSM 17343 / BCRC 17206 / CCUG 44338 / CIP 107171 / LMG 19424 / R1) (Ralstonia taiwanensis (strain LMG 19424))).